Consider the following 309-residue polypeptide: Extracellular agarase (309 aa).

Positions 1-30 (MVNRRDLIKWSAVALGAGAGLAGPAPAAHA) form a signal peptide, tat-type signal. Residues 33–309 (LEWEQYPVPA…YRWVRTYQAV (277 aa)) enclose the GH16 domain. Glu-155 acts as the Nucleophile in catalysis. The Proton donor role is filled by Glu-160.

This sequence belongs to the glycosyl hydrolase 16 family. Predicted to be exported by the Tat system. The position of the signal peptide cleavage has been experimentally proven.

The protein resides in the secreted. The enzyme catalyses Hydrolysis of (1-&gt;4)-beta-D-galactosidic linkages in agarose, giving the tetramer as the predominant product.. This Streptomyces coelicolor (strain ATCC BAA-471 / A3(2) / M145) protein is Extracellular agarase (dagA).